The chain runs to 487 residues: Cobyric acid synthase (487 aa).

The 189-residue stretch at 251–439 (KLKVVAPAYP…CHGVLDHPEA (189 aa)) folds into the GATase cobBQ-type domain. C332 functions as the Nucleophile in the catalytic mechanism. Residue H431 is part of the active site.

This sequence belongs to the CobB/CobQ family. CobQ subfamily.

The protein operates within cofactor biosynthesis; adenosylcobalamin biosynthesis. Its function is as follows. Catalyzes amidations at positions B, D, E, and G on adenosylcobyrinic A,C-diamide. NH(2) groups are provided by glutamine, and one molecule of ATP is hydrogenolyzed for each amidation. In Dechloromonas aromatica (strain RCB), this protein is Cobyric acid synthase.